The primary structure comprises 274 residues: Dermonecrotic toxin SaSicTox-betaIIB1 (274 aa).

His5 is a catalytic residue. Glu25 and Asp27 together coordinate Mg(2+). The Nucleophile role is filled by His41. 2 disulfides stabilise this stretch: Cys45–Cys51 and Cys47–Cys190. Asp85 is a binding site for Mg(2+).

Belongs to the arthropod phospholipase D family. Class II subfamily. The cofactor is Mg(2+). In terms of tissue distribution, expressed by the venom gland.

It is found in the secreted. The catalysed reaction is an N-(acyl)-sphingosylphosphocholine = an N-(acyl)-sphingosyl-1,3-cyclic phosphate + choline. It catalyses the reaction an N-(acyl)-sphingosylphosphoethanolamine = an N-(acyl)-sphingosyl-1,3-cyclic phosphate + ethanolamine. It carries out the reaction a 1-acyl-sn-glycero-3-phosphocholine = a 1-acyl-sn-glycero-2,3-cyclic phosphate + choline. The enzyme catalyses a 1-acyl-sn-glycero-3-phosphoethanolamine = a 1-acyl-sn-glycero-2,3-cyclic phosphate + ethanolamine. Functionally, dermonecrotic toxins cleave the phosphodiester linkage between the phosphate and headgroup of certain phospholipids (sphingolipid and lysolipid substrates), forming an alcohol (often choline) and a cyclic phosphate. This toxin acts on sphingomyelin (SM). It may also act on ceramide phosphoethanolamine (CPE), lysophosphatidylcholine (LPC) and lysophosphatidylethanolamine (LPE), but not on lysophosphatidylserine (LPS), and lysophosphatidylglycerol (LPG). It acts by transphosphatidylation, releasing exclusively cyclic phosphate products as second products. Induces dermonecrosis, hemolysis, increased vascular permeability, edema, inflammatory response, and platelet aggregation. The chain is Dermonecrotic toxin SaSicTox-betaIIB1 from Sicarius albospinosus (Six-eyed crab spider).